The following is a 1168-amino-acid chain: Carboxylic acid reductase (1168 aa).

Residues His-290, Ser-385, 407 to 408 (EG), Thr-412, Asp-485, 497 to 500 (YLDR), Lys-506, and Lys-606 each bind AMP. Residues 645-720 (APVLPTLCRA…ALADHIEAAR (76 aa)) form the Carrier domain. Ser-679 bears the O-(pantetheine 4'-phosphoryl)serine mark. NADP(+) is bound by residues 777 to 780 (TGFL), Arg-804, Arg-814, 844 to 845 (DK), 870 to 872 (PAA), Ser-910, Tyr-946, and Lys-950.

The protein belongs to the ATP-dependent AMP-binding enzyme family. Carboxylic acid reductase subfamily. It depends on pantetheine 4'-phosphate as a cofactor.

The catalysed reaction is a carboxylate + ATP + NADPH + H(+) = an aldehyde + AMP + diphosphate + NADP(+). It carries out the reaction a medium-chain fatty acid + ATP + H(+) = a medium-chain fatty acyl-AMP + diphosphate. It catalyses the reaction a long-chain fatty acid + ATP + H(+) = a long-chain fatty acyl-AMP + diphosphate. The enzyme catalyses dodecanoate + ATP + H(+) = dodecanoyl-AMP + diphosphate. The catalysed reaction is hexadecanoate + ATP + H(+) = hexadecanoyl-AMP + diphosphate. Catalyzes the ATP- and NADPH-dependent reduction of carboxylic acids to the corresponding aldehydes. In vitro, also catalyzes the activation of medium/long-chain fatty acids as acyl-adenylates (acyl-AMP). The chain is Carboxylic acid reductase from Mycobacterium tuberculosis (strain ATCC 25618 / H37Rv).